We begin with the raw amino-acid sequence, 77 residues long: U11-lycotoxin-Ls1b (77 aa).

Residues 1 to 20 (MKLIIFTGLALFAIVSLIEA) form the signal peptide. The propeptide occupies 21–26 (EEESGR).

This sequence belongs to the neurotoxin 19 (CSTX) family. 10 (U11-Lctx) subfamily. In terms of processing, contains 4 disulfide bonds. Expressed by the venom gland.

The protein localises to the secreted. The protein is U11-lycotoxin-Ls1b of Lycosa singoriensis (Wolf spider).